We begin with the raw amino-acid sequence, 239 residues long: uncharacterized protein (239 aa).

A run of 6 helical transmembrane segments spans residues 30-50 (VALLISMVVCSLNINILIELI), 76-96 (LYLGIILSSPIIFYEIIIFII), 107-127 (LIPILIASGCLFVAGLIFGYI), 157-177 (FIILSLFSTAISFQIPIFQIL), 188-208 (MMLSVWRYVVVGSTIFSAIIT), and 214-234 (LIQLFLSVAVMFLYFSSILVL).

The protein belongs to the TatC family.

It is found in the plastid. Its subcellular location is the chloroplast membrane. This is an uncharacterized protein from Cyanidium caldarium (Red alga).